We begin with the raw amino-acid sequence, 404 residues long: E3 ubiquitin-protein ligase RNF128 (404 aa).

The first 31 residues, 1 to 31, serve as a signal peptide directing secretion; sequence MGALKMRCQCFPLPYLSLLALLLLNLSLTRA. One can recognise a PA domain in the interval 62–166; sequence DSPIERAAGL…LKGNEIVDLI (105 aa). Residues 191–211 form a helical membrane-spanning segment; the sequence is IFFVSVSFFIVTAATVGYFIF. The RING-type; atypical zinc-finger motif lies at 260 to 301; sequence CAVCIEPYKPSDVVRILTCNHFFHKNCIDPWLLEHRTCPMCK. The disordered stretch occupies residues 336-356; the sequence is ITEEENHSETASSGYASVRGG.

Post-translationally, auto-ubiquitinated. In terms of tissue distribution, expressed in the cement gland, cranial placodes, and the pronephros.

It is found in the endomembrane system. The protein resides in the cytoplasm. The protein localises to the perinuclear region. The enzyme catalyses S-ubiquitinyl-[E2 ubiquitin-conjugating enzyme]-L-cysteine + [acceptor protein]-L-lysine = [E2 ubiquitin-conjugating enzyme]-L-cysteine + N(6)-ubiquitinyl-[acceptor protein]-L-lysine.. It participates in protein modification; protein ubiquitination. Functionally, E3 ubiquitin-protein ligase that catalyzes polyubiquitin chains. Converts epidermis into cement gland and neural tissue in whole embryos. This Xenopus laevis (African clawed frog) protein is E3 ubiquitin-protein ligase RNF128 (rnf128).